A 127-amino-acid polypeptide reads, in one-letter code: Fluoride-specific ion channel FluC 1 (127 aa).

A run of 4 helical transmembrane segments spans residues leucine 3–tryptophan 23, isoleucine 35–tyrosine 55, isoleucine 74–isoleucine 94, and leucine 102–tyrosine 122. Residues glycine 78 and threonine 81 each coordinate Na(+).

The protein belongs to the fluoride channel Fluc/FEX (TC 1.A.43) family.

Its subcellular location is the cell membrane. It catalyses the reaction fluoride(in) = fluoride(out). Na(+) is not transported, but it plays an essential structural role and its presence is essential for fluoride channel function. Fluoride-specific ion channel. Important for reducing fluoride concentration in the cell, thus reducing its toxicity. This Halalkalibacterium halodurans (strain ATCC BAA-125 / DSM 18197 / FERM 7344 / JCM 9153 / C-125) (Bacillus halodurans) protein is Fluoride-specific ion channel FluC 1.